The sequence spans 160 residues: Cytochrome b6-f complex subunit 4 (160 aa).

Helical transmembrane passes span 36–56 (LLYV…GLAV), 95–115 (LLGV…PFIE), and 131–151 (LVFI…CLPI).

Belongs to the cytochrome b family. PetD subfamily. In terms of assembly, the 4 large subunits of the cytochrome b6-f complex are cytochrome b6, subunit IV (17 kDa polypeptide, petD), cytochrome f and the Rieske protein, while the 4 small subunits are petG, petL, petM and petN. The complex functions as a dimer.

It localises to the plastid. The protein localises to the chloroplast thylakoid membrane. Its function is as follows. Component of the cytochrome b6-f complex, which mediates electron transfer between photosystem II (PSII) and photosystem I (PSI), cyclic electron flow around PSI, and state transitions. The protein is Cytochrome b6-f complex subunit 4 of Trieres chinensis (Marine centric diatom).